The following is a 705-amino-acid chain: Solute carrier family 28 member 3 (705 aa).

Residues 1 to 21 (MSRSDPDPGKNSEPSKSKMSL) show a composition bias toward basic and acidic residues. A disordered region spans residues 1–96 (MSRSDPDPGK…TEEESEDERQ (96 aa)). Over 1-119 (MSRSDPDPGK…FCRKHRVILQ (119 aa)) the chain is Cytoplasmic. The segment covering 48 to 63 (APGNSTVRSRVVQSGE) has biased composition (polar residues). The segment covering 65-74 (GRAKQDDRQI) has biased composition (basic and acidic residues). The helical transmembrane segment at 120 to 140 (HTIWAVLLTGFLALVIAACAL) threads the bilayer. Residues 141-145 (NFHRA) lie on the Extracellular side of the membrane. Residues 146-166 (LPLFVITLVTIFFVVWDRLMA) form a helical membrane-spanning segment. Topologically, residues 167–190 (KYEQRIDDVLSPGKRLLERHWFWL) are cytoplasmic. A helical transmembrane segment spans residues 191-211 (KWVVWCSLILAVILWLALDTA). At 212–214 (RLG) the chain is on the extracellular side. A helical membrane pass occupies residues 215–236 (QQQLISFGGLVMYIVLLFLFSK). At 237-244 (HPTRVYWR) the chain is on the cytoplasmic side. The helical transmembrane segment at 245-264 (PVFWGIGLQFLLGLLILRTR) threads the bilayer. The Extracellular segment spans residues 265 to 301 (PGFVAFDWMGKQVQTFLGYTDAGAQFVFGEKYTDHFF). A helical membrane pass occupies residues 302–322 (AFKILPIVVFFSTVMSMLYYL). Residues 323-346 (GLMQWIIRKVGWLMLVTMGSSPIE) are Cytoplasmic-facing. Positions 347 to 365 (SVVAAGNIFVGQTESPLLV) form an intramembrane region, helical. Topologically, residues 366–378 (QPYLPHVTKSELH) are cytoplasmic. The helical transmembrane segment at 379–401 (TIMTAGFATIAGSVLGAYISFGV) threads the bilayer. The Extracellular segment spans residues 402–403 (SS). The chain crosses the membrane as a helical span at residues 404–425 (THLLTASVMSAPAALAVAKLFW). The Cytoplasmic portion of the chain corresponds to 426–460 (PETEKPKITLKNAMKMENGDSRNLLEAATQGASSS). A helical transmembrane segment spans residues 461-486 (IPLVANIAANLIAFLALLSFVNSALS). Over 487-524 (WFGSMFDYPQLSFELICSYIFMPFSFMMGVDWQDRFMV) the chain is Extracellular. The helical intramembrane region spans 525–544 (AKLIGYKTFFNEFVAYEHLS). Residues 545–583 (KFINLRKAAGPKFVNGVQQYMSIRSETIATYALCGFANF) lie on the Extracellular side of the membrane. A helical transmembrane segment spans residues 584-594 (GSLGIVIGGLT). Residues 595 to 607 (SIAPSRKRDIASG) lie on the Cytoplasmic side of the membrane. The helical transmembrane segment at 608–630 (AMRALIAGTIACFMTACIAGMLS) threads the bilayer. Over 631-705 (DTPVAINCHH…LNCGWIPNIP (75 aa)) the chain is Extracellular.

It belongs to the concentrative nucleoside transporter (CNT) (TC 2.A.41) family. In terms of assembly, homotrimer. As to expression, expressed in kidney; in the proximal tubule, glomerulus and cortical collecting duct.

The protein resides in the cell membrane. It carries out the reaction thymidine(out) + 2 Na(+)(out) = thymidine(in) + 2 Na(+)(in). The enzyme catalyses cytidine(out) + 2 Na(+)(out) = cytidine(in) + 2 Na(+)(in). It catalyses the reaction uridine(out) + 2 Na(+)(out) = uridine(in) + 2 Na(+)(in). The catalysed reaction is adenosine(out) + 2 Na(+)(out) = adenosine(in) + 2 Na(+)(in). It carries out the reaction guanosine(out) + 2 Na(+)(out) = guanosine(in) + 2 Na(+)(in). The enzyme catalyses inosine(out) + 2 Na(+)(out) = inosine(in) + 2 Na(+)(in). Functionally, sodium-dependent, pyrimidine- and purine-selective. Involved in the homeostasis of endogenous nucleosides. Exhibits the transport characteristics of the nucleoside transport system cib or N3 subtype (N3/cib) (with marked transport of both thymidine and inosine). Employs a 2:1 sodium/nucleoside ratio. Also able to transport gemcitabine, 3'-azido-3'-deoxythymidine (AZT), ribavirin and 3-deazauridine. The chain is Solute carrier family 28 member 3 (Slc28a3) from Rattus norvegicus (Rat).